The primary structure comprises 306 residues: GTP-binding protein RAD (306 aa).

A compositionally biased stretch (gly residues) spans 1-13; it reads MTLNGGSGAGGSR. Positions 1 to 91 are disordered; it reads MTLNGGSGAG…GDSGSEDGVY (91 aa). An Omega-N-methylarginine modification is found at Arg-23. Ser-25 is subject to Phosphoserine. Residues 56–88 show a composition bias toward low complexity; sequence AATAAGTRTQGQRLDWPEGSSDSLSSGDSGSED. Residues 97–104 and 201–204 each bind GTP; these read GAPGVGKS and NKSD. Residues 276-295 are calmodulin-binding; sequence AKLFLGRIVARNSRKMAFLA.

This sequence belongs to the small GTPase superfamily. RGK family. In terms of assembly, interacts with Calmodulin preferentially in the inactive, GDP-bound form. Interacts with CAMK2D. Interacts with CACNB2; interaction may be involved in beta-adrenergic regulation of heart rate and contractile force. Interaction with CACNB2 regulates the trafficking of CACNA1C to the cell membrane.

It localises to the cell membrane. Its function is as follows. May regulate basal voltage-dependent L-type Ca(2+) currents and be required for beta-adrenergic augmentation of Ca(2+) influx in cardiomyocytes, thereby regulating increases in heart rate and contractile force. May play an important role in cardiac antiarrhythmia via the strong suppression of voltage-dependent L-type Ca(2+) currents. Regulates voltage-gated L-type calcium channel subunit alpha-1C trafficking to the cell membrane. Inhibits cardiac hypertrophy through the calmodulin-dependent kinase II (CaMKII) pathway. Inhibits phosphorylation and activation of CAMK2D. This Rattus norvegicus (Rat) protein is GTP-binding protein RAD (Rrad).